The sequence spans 280 residues: Divalent cation/proton antiporter GDT1 (280 aa).

The Cytoplasmic portion of the chain corresponds to 1-3; sequence MGN. Residues 4 to 24 traverse the membrane as a helical segment; the sequence is MIKKASLIALLPLFTAAAAAA. Over 25–45 the chain is Vacuolar; sequence TDAETSMESGSSSHLKSFLMS. A helical transmembrane segment spans residues 46–66; it reads VSMIGLSEIGDKTFLIAALMA. Over 67-71 the chain is Cytoplasmic; that stretch reads MRHKR. A helical membrane pass occupies residues 72 to 92; the sequence is VLVFSAAATSLAIMTILSGVV. The Vacuolar portion of the chain corresponds to 93–104; sequence GHSAVAFLSERY. A helical membrane pass occupies residues 105–125; the sequence is TAFFAGILFLVFGYKLTMEGL. The Cytoplasmic portion of the chain corresponds to 126-183; it reads EMSKDAGVEEEMAEVEEEIAIKDMNQDMDDVEKGGDTAYDKQLKNASIGKKIVHRIRE. Residues 184 to 204 form a helical membrane-spanning segment; that stretch reads LASFMFSPVWVQIFLMVFLGE. At 205 to 222 the chain is on the vacuolar side; the sequence is LGDRSQISIIAMATDSDY. The helical transmembrane segment at 223 to 243 threads the bilayer; that stretch reads WYVIAGAVIGHAICSGLAVVG. Over 244–255 the chain is Cytoplasmic; it reads GKLLATRISIRT. Residues 256–276 traverse the membrane as a helical segment; sequence ITLASSLLFFIFALMYIYQAF. The Vacuolar portion of the chain corresponds to 277–280; sequence TTQD.

This sequence belongs to the GDT1 family.

It localises to the golgi apparatus. Its subcellular location is the cis-Golgi network membrane. The catalysed reaction is Ca(2+)(in) + n H(+)(out) = Ca(2+)(out) + n H(+)(in). The enzyme catalyses Mn(2+)(in) + n H(+)(out) = Mn(2+)(out) + n H(+)(in). Its function is as follows. Divalent cation:proton antiporter that exchanges calcium or manganese ions for protons across the Golgi membrane. Mediates the reversible transport of calcium or manganese to the Golgi lumen driven by the proton gradient and possibly the membrane potential generated by V-ATPase. Provides calcium or manganese cofactors to resident Golgi enzymes and contributes to the maintenance of an acidic luminal Golgi pH required for proper functioning of the secretory pathway. The transport stoichiometry remains to be elucidated. This Saccharomyces cerevisiae (strain ATCC 204508 / S288c) (Baker's yeast) protein is Divalent cation/proton antiporter GDT1.